The primary structure comprises 286 residues: Lipoyl synthase (286 aa).

Residues C29, C34, C40, C55, C59, C62, and S265 each coordinate [4Fe-4S] cluster. Residues 41 to 254 (WGSGTATFMI…EKIAYSLGFS (214 aa)) enclose the Radical SAM core domain.

This sequence belongs to the radical SAM superfamily. Lipoyl synthase family. The cofactor is [4Fe-4S] cluster.

The protein resides in the cytoplasm. The catalysed reaction is [[Fe-S] cluster scaffold protein carrying a second [4Fe-4S](2+) cluster] + N(6)-octanoyl-L-lysyl-[protein] + 2 oxidized [2Fe-2S]-[ferredoxin] + 2 S-adenosyl-L-methionine + 4 H(+) = [[Fe-S] cluster scaffold protein] + N(6)-[(R)-dihydrolipoyl]-L-lysyl-[protein] + 4 Fe(3+) + 2 hydrogen sulfide + 2 5'-deoxyadenosine + 2 L-methionine + 2 reduced [2Fe-2S]-[ferredoxin]. It participates in protein modification; protein lipoylation via endogenous pathway; protein N(6)-(lipoyl)lysine from octanoyl-[acyl-carrier-protein]: step 2/2. In terms of biological role, catalyzes the radical-mediated insertion of two sulfur atoms into the C-6 and C-8 positions of the octanoyl moiety bound to the lipoyl domains of lipoate-dependent enzymes, thereby converting the octanoylated domains into lipoylated derivatives. This chain is Lipoyl synthase, found in Sulfolobus acidocaldarius (strain ATCC 33909 / DSM 639 / JCM 8929 / NBRC 15157 / NCIMB 11770).